Here is a 247-residue protein sequence, read N- to C-terminus: tRNA (guanine-N(7)-)-methyltransferase (247 aa).

S-adenosyl-L-methionine-binding positions include glycine 70, 93–94 (EI), 128–129 (NA), and leucine 148. Aspartate 151 is an active-site residue. 226 to 228 (SEE) contributes to the S-adenosyl-L-methionine binding site.

Belongs to the class I-like SAM-binding methyltransferase superfamily. TrmB family.

Its subcellular location is the nucleus. The catalysed reaction is guanosine(46) in tRNA + S-adenosyl-L-methionine = N(7)-methylguanosine(46) in tRNA + S-adenosyl-L-homocysteine. Its pathway is tRNA modification; N(7)-methylguanine-tRNA biosynthesis. In terms of biological role, catalyzes the formation of N(7)-methylguanine at position 46 (m7G46) in tRNA. This is tRNA (guanine-N(7)-)-methyltransferase from Drosophila virilis (Fruit fly).